A 579-amino-acid polypeptide reads, in one-letter code: CTP synthase 1 (579 aa).

In terms of domain architecture, Glutamine amidotransferase type-1 spans 305 to 559 (KIALVGKYTN…LGLVAASAGI (255 aa)). The For GATase activity role is filled by C404. Residue K422 forms a Glycyl lysine isopeptide (Lys-Gly) (interchain with G-Cter in ubiquitin) linkage. Residues H535 and E537 each act as for GATase activity in the active site.

The protein belongs to the CTP synthase family. Homodimer. Oligomerizes to a tetramer in the presence of its substrates UTP and ATP.

It carries out the reaction UTP + L-glutamine + ATP + H2O = CTP + L-glutamate + ADP + phosphate + 2 H(+). Its pathway is pyrimidine metabolism; CTP biosynthesis via de novo pathway; CTP from UDP: step 2/2. With respect to regulation, activated by GTP and inhibited by CTP. Functionally, catalyzes the ATP-dependent amination of UTP to CTP with either L-glutamine or ammonia as the source of nitrogen. The protein is CTP synthase 1 (URA7) of Saccharomyces cerevisiae (strain ATCC 204508 / S288c) (Baker's yeast).